A 374-amino-acid polypeptide reads, in one-letter code: Proteinase-activated receptor 3 (374 aa).

The first 21 residues, 1 to 21 (MKALIFAAAGLLLLLPTFCQS), serve as a signal peptide directing secretion. Positions 22–38 (GMENDTNNLAKPTLPIK) are cleaved as a propeptide — removed for receptor activation. N-linked (GlcNAc...) asparagine glycans are attached at residues asparagine 25 and asparagine 82. At 39–94 (TFRGAPPNSFEEFPFSALEGWTGATITVKIKCPEESASHLHVKNATMGYLTSSLST) the chain is on the extracellular side. The helical transmembrane segment at 95 to 120 (KLIPAIYLLVFVVGVPANAVTLWMLF) threads the bilayer. Residues 121–128 (FRTRSICT) lie on the Cytoplasmic side of the membrane. Residues 129-148 (TVFYTNLAIADFLFCVTLPF) traverse the membrane as a helical segment. Residues 149-167 (KIAYHLNGNNWVFGEVLCR) lie on the Extracellular side of the membrane. Residues cysteine 166 and cysteine 245 are joined by a disulfide bond. A helical membrane pass occupies residues 168 to 189 (ATTVIFYGNMYCSILLLACISI). The Cytoplasmic segment spans residues 190-206 (NRYLAIVHPFTYRGLPK). Residues 207–230 (HTYALVTCGLVWATVFLYMLPFFI) form a helical membrane-spanning segment. Residues 231–260 (LKQEYYLVQPDITTCHDVHNTCESSSPFQL) are Extracellular-facing. A helical transmembrane segment spans residues 261–280 (YYFISLAFFGFLIPFVLIIY). At 281 to 297 (CYAAIIRTLNAYDHRWL) the chain is on the cytoplasmic side. A helical transmembrane segment spans residues 298-322 (WYVKASLLILVIFTICFAPSNIILI). At 323-336 (IHHANYYYNNTDGL) the chain is on the extracellular side. Asparagine 331 carries N-linked (GlcNAc...) asparagine glycosylation. The helical transmembrane segment at 337–361 (YFIYLIALCLGSLNSCLDPFLYFLM) threads the bilayer. Topologically, residues 362-374 (SKTRNHSTAYLTK) are cytoplasmic.

It belongs to the G-protein coupled receptor 1 family. In terms of assembly, interacts with INSC/inscuteable and probably GPSM2. In terms of processing, a proteolytic cleavage generates a new N-terminus that functions as a tethered ligand. In terms of tissue distribution, highest expression in the megakaryocytes of the bone marrow, lower in mature megakaryocytes, in platelets and in a variety of other tissues such as heart and gut.

It localises to the cell membrane. Receptor for activated thrombin coupled to G proteins that stimulate phosphoinositide hydrolysis. The protein is Proteinase-activated receptor 3 (F2RL2) of Homo sapiens (Human).